A 513-amino-acid polypeptide reads, in one-letter code: Exoglucanase 1 (513 aa).

A signal peptide spans 1–17 (MYRKLAVISAFLATARA). Position 18 is a pyrrolidone carboxylic acid (glutamine 18). The interval 18 to 453 (QSACTLQSET…GSTGNPSGGN (436 aa)) is catalytic. 10 disulfide bridges follow: cysteine 21/cysteine 89, cysteine 36/cysteine 42, cysteine 67/cysteine 88, cysteine 78/cysteine 84, cysteine 155/cysteine 414, cysteine 189/cysteine 227, cysteine 193/cysteine 226, cysteine 247/cysteine 273, cysteine 255/cysteine 260, and cysteine 278/cysteine 348. The N-linked (GlcNAc) asparagine glycan is linked to asparagine 62. The Nucleophile role is filled by glutamate 229. Glutamate 234 acts as the Proton donor/acceptor in catalysis. Residues asparagine 287 and asparagine 401 are each glycosylated (N-linked (GlcNAc) asparagine). The span at 401 to 437 (NETSSTPGAVRGSCSTSSGVPAQVESQSPNAKVTFSN) shows a compositional bias: polar residues. Residues 401 to 480 (NETSSTPGAV…TGSSPGPTQS (80 aa)) are disordered. The span at 449–459 (PSGGNPPGGNR) shows a compositional bias: gly residues. The linker stretch occupies residues 454-477 (PPGGNRGTTTTRRPATTTGSSPGP). The span at 460-478 (GTTTTRRPATTTGSSPGPT) shows a compositional bias: low complexity. Threonine 461 is a glycosylation site (O-linked (Man) threonine). O-linked (Man...) threonine glycosylation is found at threonine 462, threonine 463, and threonine 464. A glycan (O-linked (Man) threonine) is linked at threonine 469. O-linked (Man...) threonine glycosylation is found at threonine 470 and threonine 471. O-linked (Man) serine glycans are attached at residues serine 473 and serine 474. The CBM1 domain occupies 477–513 (PTQSHYGQCGGIGYSGPTVCASGTTCQVLNPYYSQCL). An O-linked (Man) threonine glycan is attached at threonine 478. O-linked (Man) serine glycosylation is found at serine 480 and serine 491. 2 disulfides stabilise this stretch: cysteine 485–cysteine 502 and cysteine 496–cysteine 512.

It belongs to the glycosyl hydrolase 7 (cellulase C) family. N-glycosylated. The catalytic core domain comprises three N-linked glycans which each consist of a single N-acetylglucosamine residue. Post-translationally, O-glycosylated. Within the linker domain, all 8 threonines are variably glycosylated with between at least one, and up to three, mannose residues per site. All serines in this domain are at least partially glycosylated with a single mannose residue. O-glycosylation of the cellulase linker provides protection from proteolysis. Linker glycans also contribute to binding affinity of cellobiohydrolases to cellulose.

The protein resides in the secreted. The enzyme catalyses Hydrolysis of (1-&gt;4)-beta-D-glucosidic linkages in cellulose and cellotetraose, releasing cellobiose from the non-reducing ends of the chains.. Exocellobiohydrolases (CBH) that catalyzes the hydrolysis of 1,4-beta-D-glucosidic bonds in cellulose to release the disaccharide cellobiose. The degradation of cellulose involves an interplay between different cellulolytic enzymes. Hydrolysis starts with endoglucanases (EGs), which cut internal beta-1,4-glucosidic bonds in cellulose to reduce the polymerization degree of the substrate and create new chain ends for exocellobiohydrolases (CBHs). The CBHs release the disaccharide cellobiose from the non-reducing end of the cellulose polymer chain. Finally, beta-1,4-glucosidases hydrolyze the cellobiose and other short cello-oligosaccharides into glucose units. The sequence is that of Exoglucanase 1 (cbh1) from Hypocrea jecorina (Trichoderma reesei).